Consider the following 585-residue polypeptide: MITGNIIKIAGPVIIGDGMRGTQIHEMVRVGDIGLIGEIIELEGDTATVQVYEETAGIKPGEKIESTGGPLSVELGPGILKSIYDGIQRPLDEIKSVSGDFIPRGIDVPALDKVKEWEFKPTASVGDKVNGGDIIGTVDETSAIVHKIMIPPKMSGTIKSIVSQGKYNVTEDIAEVETENGIETVQMMQVWPVRVGRPYTNKLDPDVPLITGQRAQDTFFCVAKGGTSAMPGPFGSGKTVTQQQLAKWADADIVVYIGCGERGNEMTEVLTEFPELEDPKTGNPLMDRTVLIANTSNMPVAAREACVYTGITIAEYFRDMGYDVALMADSTSRWAEAMRELSGRLEEMPGEEGYPAYLASRLAQFYERAGRVTTIGSHKAEASVTVVGAVSPPGGDLSEPVTQNTLRIAKVFWALDASLADRRHFPSINWLNSYSLYVDSITNWWNSQIGSDWRDLRNTAMALLQKESELNEIVQLVGPDALPQKDRVTLESARMLREDFLQQNAFDDTDTYCSPSKQYNMLKTILLYNTTAQSALADGADINKLVNLDVRVDLGKMKYIPEDEFEAKVEDIRNRITKECNEAGQ.

232–239 provides a ligand contact to ATP; it reads GPFGSGKT.

It belongs to the ATPase alpha/beta chains family. In terms of assembly, has multiple subunits with at least A(3), B(3), C, D, E, F, H, I and proteolipid K(x).

Its subcellular location is the cell membrane. The enzyme catalyses ATP + H2O + 4 H(+)(in) = ADP + phosphate + 5 H(+)(out). In terms of biological role, component of the A-type ATP synthase that produces ATP from ADP in the presence of a proton gradient across the membrane. The A chain is the catalytic subunit. The polypeptide is A-type ATP synthase subunit A (Methanosphaera stadtmanae (strain ATCC 43021 / DSM 3091 / JCM 11832 / MCB-3)).